A 709-amino-acid chain; its full sequence is Heme/hemopexin utilization protein C (709 aa).

An N-terminal signal peptide occupies residues Met-1–Ala-21. A TBDR plug domain is found at Asp-36–Pro-147. The TBDR beta-barrel domain maps to Lys-158–Phe-709. The TonB C-terminal box motif lies at Ser-692–Phe-709.

This sequence belongs to the TonB-dependent receptor family.

The protein localises to the cell outer membrane. Its function is as follows. Required for utilization of free heme at low concentrations. The polypeptide is Heme/hemopexin utilization protein C (hxuC) (Haemophilus influenzae (strain 86-028NP)).